A 233-amino-acid chain; its full sequence is tRNA (guanine-N(1)-)-methyltransferase (233 aa).

S-adenosyl-L-methionine is bound by residues Gly110 and 130–135 (IGDYVM).

This sequence belongs to the RNA methyltransferase TrmD family. As to quaternary structure, homodimer.

The protein localises to the cytoplasm. It carries out the reaction guanosine(37) in tRNA + S-adenosyl-L-methionine = N(1)-methylguanosine(37) in tRNA + S-adenosyl-L-homocysteine + H(+). Specifically methylates guanosine-37 in various tRNAs. The chain is tRNA (guanine-N(1)-)-methyltransferase from Finegoldia magna (strain ATCC 29328 / DSM 20472 / WAL 2508) (Peptostreptococcus magnus).